The following is a 143-amino-acid chain: Peptide methionine sulfoxide reductase B8 (143 aa).

Positions 18–139 (DEEWRAVLSP…NSVSLKFASA (122 aa)) constitute a MsrB domain. Positions 57, 60, 103, and 106 each coordinate Zn(2+). Cys75 and Cys128 are oxidised to a cystine. Cys128 serves as the catalytic Nucleophile.

Belongs to the MsrB Met sulfoxide reductase family. The cofactor is Zn(2+).

The protein localises to the cytoplasm. It localises to the cytosol. The enzyme catalyses L-methionyl-[protein] + [thioredoxin]-disulfide + H2O = L-methionyl-(R)-S-oxide-[protein] + [thioredoxin]-dithiol. Functionally, catalyzes the reduction of methionine sulfoxide (MetSO) to methionine in proteins. Plays a protective role against oxidative stress by restoring activity to proteins that have been inactivated by methionine oxidation. MSRB family specifically reduces the MetSO R-enantiomer. The polypeptide is Peptide methionine sulfoxide reductase B8 (MSRB8) (Arabidopsis thaliana (Mouse-ear cress)).